Reading from the N-terminus, the 300-residue chain is Sulfate adenylyltransferase subunit 2 (300 aa).

This sequence belongs to the PAPS reductase family. CysD subfamily. In terms of assembly, heterodimer composed of CysD, the smaller subunit, and CysN.

It carries out the reaction sulfate + ATP + H(+) = adenosine 5'-phosphosulfate + diphosphate. It participates in sulfur metabolism; hydrogen sulfide biosynthesis; sulfite from sulfate: step 1/3. With CysN forms the ATP sulfurylase (ATPS) that catalyzes the adenylation of sulfate producing adenosine 5'-phosphosulfate (APS) and diphosphate, the first enzymatic step in sulfur assimilation pathway. APS synthesis involves the formation of a high-energy phosphoric-sulfuric acid anhydride bond driven by GTP hydrolysis by CysN coupled to ATP hydrolysis by CysD. The chain is Sulfate adenylyltransferase subunit 2 from Magnetococcus marinus (strain ATCC BAA-1437 / JCM 17883 / MC-1).